A 176-amino-acid polypeptide reads, in one-letter code: Flavodoxin (176 aa).

The Flavodoxin-like domain occupies 4–165 (IGIFFGSDTG…RVEKWVKQVA (162 aa)).

Belongs to the flavodoxin family. FMN serves as cofactor.

Functionally, low-potential electron donor to a number of redox enzymes. The protein is Flavodoxin (fldA) of Klebsiella pneumoniae.